The following is a 488-amino-acid chain: Zinc finger protein 345 (488 aa).

15 C2H2-type zinc fingers span residues 62-84 (LECK…QRIH), 90-112 (YECK…QRIH), 118-140 (FECK…QRIH), 146-168 (YECK…QIIH), 174-196 (YECK…HRIH), 202-224 (YECI…RRIH), 230-252 (YECK…QRIH), 258-280 (YICN…QRIH), 286-308 (YVCK…QRIH), 314-336 (YECK…QRMH), 342-364 (YECK…HRIH), 370-392 (YECK…QLIH), 398-420 (YECK…QRIH), 426-448 (YECK…QRIH), and 454-476 (YECK…KKSH).

This sequence belongs to the krueppel C2H2-type zinc-finger protein family.

It localises to the nucleus. In terms of biological role, may be involved in transcriptional regulation. The chain is Zinc finger protein 345 (ZNF345) from Homo sapiens (Human).